We begin with the raw amino-acid sequence, 501 residues long: REAREKETKALSLSRALEEALEAKEEFERQNKQLRADMEDLMSSKDDVGKNVHELEKSKRALEQQVEEMRTQLEELEDELQATEDAKLRLEVNTQAMKAQFERDLQARDEQSEEKKRLLTKQVRELEAELEDERKQRALAVASKKKMEIDLKDLEAQIEAANKARERRVKQLRRLQAQMKDYQRELEEARGSRDEIFAQSKESEKKLKSLEAEILQLQEELASSERARRHAEQERDELADEIANSASGKSALLDEKRRLEARMRQLEEELEEEQSNMELLNDRFRKTTLQVDTLNAELAAERSAAQKSDNARQQLERQNKDLKAKLQELEGAVKSKFKATISALEAKIGQLEEQLEQEAKERAAANKLVRRTEKKLKEIFMQVEDERRHADQYKEQMEKANARMKQLKRQLEEAEEEATRANASRRKLQRELDDATEANEGLSREVSTLKNRLRRGGPISFSSSRSGRPQLHIEGASLELSDDDTESKTSDVNETQPPQSE.

Positions 1–457 form a coiled coil; sequence REAREKETKA…TLKNRLRRGG (457 aa). The interval 1-501 is rodlike tail (S2 and LMM domains); it reads REAREKETKA…VNETQPPQSE (501 aa). 3 disordered regions span residues 182–202, 221–254, and 397–501; these read YQRE…QSKE, LASS…ALLD, and MEKA…PQSE. Positions 223 to 233 are enriched in basic and acidic residues; that stretch reads SSERARRHAEQ. Over residues 492-501 the composition is skewed to polar residues; it reads VNETQPPQSE.

Muscle myosin is a hexameric protein that consists of 2 heavy chain subunits (MHC), 2 alkali light chain subunits (MLC) and 2 regulatory light chain subunits (MLC-2).

The protein resides in the cytoplasm. Its subcellular location is the myofibril. Functionally, muscle contraction. In Oryctolagus cuniculus (Rabbit), this protein is Myosin heavy chain, embryonic smooth muscle isoform.